The following is a 282-amino-acid chain: HTH-type transcriptional activator RhaR (282 aa).

The region spanning 179–277 (DKLITALANS…GMTPSQWRHL (99 aa)) is the HTH araC/xylS-type domain. 2 DNA-binding regions (H-T-H motif) span residues 196–217 (DAFC…RAQT) and 244–267 (VSEI…TRET).

In terms of assembly, binds DNA as a dimer.

It localises to the cytoplasm. Its function is as follows. Activates expression of the rhaSR operon in response to L-rhamnose. The sequence is that of HTH-type transcriptional activator RhaR from Salmonella typhi.